A 100-amino-acid polypeptide reads, in one-letter code: Large ribosomal subunit protein uL23 (100 aa).

Belongs to the universal ribosomal protein uL23 family. Part of the 50S ribosomal subunit. Contacts protein L29, and trigger factor when it is bound to the ribosome.

One of the early assembly proteins it binds 23S rRNA. One of the proteins that surrounds the polypeptide exit tunnel on the outside of the ribosome. Forms the main docking site for trigger factor binding to the ribosome. The polypeptide is Large ribosomal subunit protein uL23 (Aliivibrio fischeri (strain MJ11) (Vibrio fischeri)).